Reading from the N-terminus, the 256-residue chain is MTRQAIVAANWKMNGDSALVDTMVSGLADIELSSHVDVVICPSFPYLSELNQKIKAANLNEAIHVGSQNVSEHESGAYTGEVSTAMLQNLAINYVIVGHSERRSIFKETSTQVAKKVHAALNAGLTPILCIGESEAERATGETETVLSAQIQPVIDEIGIEKFKDVVIAYEPVWAIGTGKTASSAMAQETHQFIRKFLAQQNEQVADKVPLLYGGSVNAANCEELFAQTDIDGGLIGGASLKAEQFKIICSAAKGK.

10-12 provides a ligand contact to substrate; the sequence is NWK. Histidine 99 acts as the Electrophile in catalysis. Glutamate 171 functions as the Proton acceptor in the catalytic mechanism. Substrate is bound by residues glycine 177, serine 216, and 237-238; that span reads GG.

Belongs to the triosephosphate isomerase family. In terms of assembly, homodimer.

The protein localises to the cytoplasm. The catalysed reaction is D-glyceraldehyde 3-phosphate = dihydroxyacetone phosphate. Its pathway is carbohydrate biosynthesis; gluconeogenesis. It participates in carbohydrate degradation; glycolysis; D-glyceraldehyde 3-phosphate from glycerone phosphate: step 1/1. Its function is as follows. Involved in the gluconeogenesis. Catalyzes stereospecifically the conversion of dihydroxyacetone phosphate (DHAP) to D-glyceraldehyde-3-phosphate (G3P). The sequence is that of Triosephosphate isomerase from Colwellia psychrerythraea (strain 34H / ATCC BAA-681) (Vibrio psychroerythus).